The primary structure comprises 150 residues: FAD synthase (150 aa).

Residues 10–11 (VF), 15–18 (HPGH), aspartate 97, and tyrosine 124 each bind ATP.

This sequence belongs to the archaeal FAD synthase family. As to quaternary structure, homodimer. The cofactor is a divalent metal cation.

It catalyses the reaction FMN + ATP + H(+) = FAD + diphosphate. It functions in the pathway cofactor biosynthesis; FAD biosynthesis; FAD from FMN: step 1/1. Functionally, catalyzes the transfer of the AMP portion of ATP to flavin mononucleotide (FMN) to produce flavin adenine dinucleotide (FAD) coenzyme. This chain is FAD synthase, found in Methanopyrus kandleri (strain AV19 / DSM 6324 / JCM 9639 / NBRC 100938).